Consider the following 141-residue polypeptide: Hemoglobin subunit alpha-3 (141 aa).

The Globin domain maps to 1–141 (VLSPADKTNV…VSTVLTSKYR (141 aa)). An O2-binding site is contributed by histidine 58. Histidine 87 contacts heme b.

The protein belongs to the globin family. As to quaternary structure, heterotetramer of two alpha chains and two beta chains. In terms of tissue distribution, red blood cells.

In terms of biological role, involved in oxygen transport from the lung to the various peripheral tissues. This is Hemoglobin subunit alpha-3 from Gorilla gorilla gorilla (Western lowland gorilla).